The sequence spans 355 residues: UDP-3-O-acylglucosamine N-acyltransferase (355 aa).

The active-site Proton acceptor is histidine 248.

It belongs to the transferase hexapeptide repeat family. LpxD subfamily. As to quaternary structure, homotrimer.

It catalyses the reaction a UDP-3-O-[(3R)-3-hydroxyacyl]-alpha-D-glucosamine + a (3R)-hydroxyacyl-[ACP] = a UDP-2-N,3-O-bis[(3R)-3-hydroxyacyl]-alpha-D-glucosamine + holo-[ACP] + H(+). Its pathway is bacterial outer membrane biogenesis; LPS lipid A biosynthesis. Catalyzes the N-acylation of UDP-3-O-acylglucosamine using 3-hydroxyacyl-ACP as the acyl donor. Is involved in the biosynthesis of lipid A, a phosphorylated glycolipid that anchors the lipopolysaccharide to the outer membrane of the cell. The sequence is that of UDP-3-O-acylglucosamine N-acyltransferase from Syntrophobacter fumaroxidans (strain DSM 10017 / MPOB).